The sequence spans 63 residues: Large ribosomal subunit protein bL32c (63 aa).

Positions S39–E63 are disordered. The span at S53 to E63 shows a compositional bias: polar residues.

Belongs to the bacterial ribosomal protein bL32 family.

It is found in the plastid. The protein resides in the chloroplast. This Triticum aestivum (Wheat) protein is Large ribosomal subunit protein bL32c.